A 284-amino-acid polypeptide reads, in one-letter code: RNase adapter protein RapZ (284 aa).

8–15 (GRSGSGKS) serves as a coordination point for ATP. GTP is bound at residue 56–59 (DVRN). The interval 266 to 284 (RSRGKNVQSRHRTLEKRKT) is RNA-binding.

Belongs to the RapZ-like family. RapZ subfamily. As to quaternary structure, homotrimer.

Functionally, modulates the synthesis of GlmS, by affecting the processing and stability of the regulatory small RNA GlmZ. When glucosamine-6-phosphate (GlcN6P) concentrations are high in the cell, RapZ binds GlmZ and targets it to cleavage by RNase E. Consequently, GlmZ is inactivated and unable to activate GlmS synthesis. Under low GlcN6P concentrations, RapZ is sequestered and inactivated by an other regulatory small RNA, GlmY, preventing GlmZ degradation and leading to synthesis of GlmS. In Escherichia fergusonii (strain ATCC 35469 / DSM 13698 / CCUG 18766 / IAM 14443 / JCM 21226 / LMG 7866 / NBRC 102419 / NCTC 12128 / CDC 0568-73), this protein is RNase adapter protein RapZ.